Consider the following 248-residue polypeptide: Aquaporin TIP2-3 (248 aa).

The next 2 membrane-spanning stretches (helical) occupy residues 20 to 40 (AYVA…GSAI) and 54 to 74 (AGLV…VSMA). The NPA 1 signature appears at 83–85 (NPA). 3 consecutive transmembrane segments (helical) span residues 97–119 (TILT…CFLL), 141–161 (GVVM…ATAA), and 168–188 (LGTI…LAAG). The short motif at 196–198 (NPA) is the NPA 2 element. The helical transmembrane segment at 217 to 237 (WVGPLVGGGLAGLVYGDVFIA) threads the bilayer.

This sequence belongs to the MIP/aquaporin (TC 1.A.8) family. TIP (TC 1.A.8.10) subfamily. In terms of tissue distribution, specifically expressed in roots.

Its subcellular location is the cell membrane. In terms of biological role, water channel required to facilitate the transport of water across cell membrane. This Zea mays (Maize) protein is Aquaporin TIP2-3 (TIP2-3).